A 518-amino-acid polypeptide reads, in one-letter code: 2-isopropylmalate synthase (518 aa).

The 263-residue stretch at 4-266 (INVFDTTLRD…DSSLNLHELK (263 aa)) folds into the Pyruvate carboxyltransferase domain. Aspartate 13, histidine 201, histidine 203, and asparagine 237 together coordinate Mn(2+). Residues 391–518 (EFLSLQVHYG…GLKRQTAVGS (128 aa)) are regulatory domain.

The protein belongs to the alpha-IPM synthase/homocitrate synthase family. LeuA type 1 subfamily. In terms of assembly, homodimer. The cofactor is Mn(2+).

The protein localises to the cytoplasm. The enzyme catalyses 3-methyl-2-oxobutanoate + acetyl-CoA + H2O = (2S)-2-isopropylmalate + CoA + H(+). It participates in amino-acid biosynthesis; L-leucine biosynthesis; L-leucine from 3-methyl-2-oxobutanoate: step 1/4. Functionally, catalyzes the condensation of the acetyl group of acetyl-CoA with 3-methyl-2-oxobutanoate (2-ketoisovalerate) to form 3-carboxy-3-hydroxy-4-methylpentanoate (2-isopropylmalate). The protein is 2-isopropylmalate synthase of Bacillus velezensis (strain DSM 23117 / BGSC 10A6 / LMG 26770 / FZB42) (Bacillus amyloliquefaciens subsp. plantarum).